Consider the following 1616-residue polypeptide: Vitellogenin-1 (1616 aa).

The first 19 residues, 1-19 (MRSIIIASIVALAIAFSPA), serve as a signal peptide directing secretion. The Vitellogenin domain occupies 24-689 (FEPKIDYHYK…EKNSFLLKDL (666 aa)). Asn1270 is a glycosylation site (N-linked (GlcNAc...) asparagine). One can recognise a VWFD domain in the interval 1310–1479 (SVCKVQKNQI…SYLLKNEECE (170 aa)). 2 cysteine pairs are disulfide-bonded: Cys1312–Cys1442 and Cys1334–Cys1478. Positions 1505–1514 (SFEETYDYEQ) are enriched in acidic residues. The tract at residues 1505–1531 (SFEETYDYEQENTNKKQKNQRSQKKSD) is disordered.

Expressed in the intestine of adult hermaphrodites.

The protein resides in the secreted. In terms of biological role, precursor of the egg-yolk proteins that are sources of nutrients during embryonic development. Together with other vitellogenins, may play a role in modulating life-span, acting via induction of autophagy and lysosomal lipolysis. The chain is Vitellogenin-1 (vit-1) from Caenorhabditis elegans.